We begin with the raw amino-acid sequence, 96 residues long: MQIITTALVCLLLAGMWPEDVDSKSMQVPFSRCCFSFAEQEIPLRAILCYRNTSSICSNEGLIFKLKRGKEACALDTVGWVQRHRKMLRHCPSKRK.

An N-terminal signal peptide occupies residues 1-23 (MQIITTALVCLLLAGMWPEDVDS). 3 cysteine pairs are disulfide-bonded: cysteine 33–cysteine 57, cysteine 34–cysteine 73, and cysteine 49–cysteine 91. A glycan (N-linked (GlcNAc...) asparagine) is linked at asparagine 52.

It belongs to the intercrine beta (chemokine CC) family. As to quaternary structure, monomer.

The protein resides in the secreted. Cytokine that is chemotactic for monocytes but not for neutrophils. Binds to CCR8. The chain is C-C motif chemokine 1 (CCL1) from Homo sapiens (Human).